The sequence spans 307 residues: Taste receptor type 2 member 41 (307 aa).

Topologically, residues 1–7 (MQAALTA) are extracellular. A helical membrane pass occupies residues 8-28 (FFMLLFSLLSLLGIAANGFIV). Residues 29–40 (LVLGREWLRYGR) lie on the Cytoplasmic side of the membrane. A helical membrane pass occupies residues 41–61 (LLPLDMILISLGASRFCLQLV). Residues 62–88 (GTVHNFYYSAQKVEYSGGLGRQFFHLH) are Extracellular-facing. The helical transmembrane segment at 89–109 (WHFLNSATFWFCSWLSVLFCV) threads the bilayer. At 110-129 (KIANITHPTFLWLKWRFPGW) the chain is on the cytoplasmic side. Residues 130–150 (VPWLLLGSVLISFIITLLFFW) form a helical membrane-spanning segment. Topologically, residues 151 to 183 (VNYPAYQEFLIRKFSVNMTYKWNTRIETYYFPS) are extracellular. Asn-167 is a glycosylation site (N-linked (GlcNAc...) asparagine). A helical membrane pass occupies residues 184 to 204 (LKLVIWSIPFSVFLVSIMLLI). The Cytoplasmic portion of the chain corresponds to 205–234 (NSLRRHTQRMQHNGHSLQDPSTQAHTRALK). A helical membrane pass occupies residues 235-255 (SLISFLILYALSFLSLIIDAT). The Extracellular segment spans residues 256–264 (KFISMQNDF). Residues 265–285 (YWPWQIAVYLCISVHPFILIF) traverse the membrane as a helical segment. The Cytoplasmic portion of the chain corresponds to 286–307 (SNLKLRSVFSQLLLLARGFWVA).

The protein belongs to the G-protein coupled receptor T2R family.

Its subcellular location is the membrane. Functionally, receptor that may play a role in the perception of bitterness and is gustducin-linked. May play a role in sensing the chemical composition of the gastrointestinal content. The activity of this receptor may stimulate alpha gustducin, mediate PLC-beta-2 activation and lead to the gating of TRPM5. The chain is Taste receptor type 2 member 41 (TAS2R41) from Pan troglodytes (Chimpanzee).